Consider the following 454-residue polypeptide: B-cell lymphoma 3 protein (454 aa).

The disordered stretch occupies residues 1–50 (MPRCPAGAMDEGPVDLRTRPKAAGLPGAALPLRKRPLRAPSPEPAAPRGA). Positions 21-31 (KAAGLPGAALP) are enriched in low complexity. Ser-41 is subject to Phosphoserine. ANK repeat units follow at residues 134–163 (DGDT…QGGR), 171–200 (LRQT…SPMA), 204–235 (HGQT…TLDL), 241–270 (DGLT…DIDA), 275–304 (SGRS…NVNA), 308–337 (SGSS…DSSL), and 338–367 (KNCH…RPAS). The tract at residues 360–454 (GKATRPASTS…VPPSPAPGGS (95 aa)) is disordered. The span at 365–381 (PASTSQPDPSPDRSANT) shows a compositional bias: polar residues. A Phosphoserine modification is found at Ser-374. Over residues 382–404 (SPESSSRLSSNGLLSASPSSSPS) the composition is skewed to low complexity. Phosphoserine; by GSK3 is present on residues Ser-402 and Ser-406. Pro residues predominate over residues 405-418 (QSPPRDPPGFPMAP). Low complexity predominate over residues 432 to 442 (LPFAGVLRGPG). Pro residues predominate over residues 443–454 (RPVPPSPAPGGS).

In terms of assembly, component of a complex consisting of the NF-kappa-B p52-p52 homodimer and BCL3. Component of a complex consisting of the NF-kappa-B p50-p50 homodimer and BCL3. Interacts with N4BP2, COPS5 and PIR. Interacts with CYLD. Polyubiquitinated. Ubiquitination via 'Lys-63'-linked ubiquitin chains is required for nuclear accumulation. Deubiquitinated by CYLD, which acts on 'Lys-63'-linked ubiquitin chains. Deubiquitination by CYLD prevents nuclear accumulation. Post-translationally, activated by phosphorylation.

The protein resides in the nucleus. It localises to the cytoplasm. It is found in the perinuclear region. Functionally, contributes to the regulation of transcriptional activation of NF-kappa-B target genes. In the cytoplasm, inhibits the nuclear translocation of the NF-kappa-B p50 subunit. In the nucleus, acts as transcriptional activator that promotes transcription of NF-kappa-B target genes. Contributes to the regulation of cell proliferation. This Homo sapiens (Human) protein is B-cell lymphoma 3 protein (BCL3).